We begin with the raw amino-acid sequence, 85 residues long: Large ribosomal subunit protein bL27 (85 aa).

The disordered stretch occupies residues 1 to 22; that stretch reads MAHKKAGGSTNNGRDSESKRLG.

This sequence belongs to the bacterial ribosomal protein bL27 family.

The polypeptide is Large ribosomal subunit protein bL27 (Psychromonas ingrahamii (strain DSM 17664 / CCUG 51855 / 37)).